Here is a 376-residue protein sequence, read N- to C-terminus: E3 ubiquitin-protein ligase RNF34 (376 aa).

An FYVE-type zinc finger spans residues 56 to 107 (EGPNIVCKACGLSFSVFRKKHVCCDCKKDFCSLCSVSQENLRRCSTCHLLQE). The SAP 1 domain maps to 115–134 (LMRLKVKDLRQYLLLRNIPT). A Phosphoserine modification is found at serine 169. Positions 216–256 (IASANTDDDDDDDDDDDDDEDDDDEQEEEEQNPGLSKKKAR) are disordered. A compositionally biased stretch (acidic residues) spans 221-246 (TDDDDDDDDDDDDDEDDDDEQEEEEQ). A phosphoserine mark is found at serine 258 and serine 260. The SAP 2 domain maps to 268–282 (VEGMSVRQLKEILAR). Residues 329-364 (CRICMDAVIDCVLLECGHMVTCTKCGKRMSECPICR) form an RING-type zinc finger.

As to quaternary structure, interacts with CASP8 and CASP10. Interacts with p53/TP53; involved in p53/TP53 ubiquitination. Interacts (via RING-type zinc finger) with MDM2; the interaction stabilizes MDM2. Interacts (via RING-type zinc finger) with PPARGC1A. Interacts with NOD1. Post-translationally, autoubiquitinated (in vitro). Proteolytically cleaved by caspases upon induction of apoptosis by TNF.

The protein localises to the cell membrane. It localises to the endomembrane system. The protein resides in the nucleus. It is found in the nucleus speckle. Its subcellular location is the cytoplasm. The protein localises to the cytosol. It catalyses the reaction S-ubiquitinyl-[E2 ubiquitin-conjugating enzyme]-L-cysteine + [acceptor protein]-L-lysine = [E2 ubiquitin-conjugating enzyme]-L-cysteine + N(6)-ubiquitinyl-[acceptor protein]-L-lysine.. It functions in the pathway protein modification; protein ubiquitination. Its function is as follows. E3 ubiquitin-protein ligase that regulates several biological processes through the ubiquitin-mediated proteasomal degradation of various target proteins. Ubiquitinates the caspases CASP8 and CASP10, promoting their proteasomal degradation, to negatively regulate cell death downstream of death domain receptors in the extrinsic pathway of apoptosis. May mediate 'Lys-48'-linked polyubiquitination of RIPK1 and its subsequent proteasomal degradation thereby indirectly regulating the tumor necrosis factor-mediated signaling pathway. Negatively regulates p53/TP53 through its direct ubiquitination and targeting to proteasomal degradation. Indirectly, may also negatively regulate p53/TP53 through ubiquitination and degradation of SFN. Mediates PPARGC1A proteasomal degradation probably through ubiquitination thereby indirectly regulating the metabolism of brown fat cells. Possibly involved in innate immunity, through 'Lys-48'-linked polyubiquitination of NOD1 and its subsequent proteasomal degradation. This Mus musculus (Mouse) protein is E3 ubiquitin-protein ligase RNF34.